Reading from the N-terminus, the 511-residue chain is Exodeoxyribonuclease 7 large subunit (511 aa).

This sequence belongs to the XseA family. Heterooligomer composed of large and small subunits.

The protein localises to the cytoplasm. It carries out the reaction Exonucleolytic cleavage in either 5'- to 3'- or 3'- to 5'-direction to yield nucleoside 5'-phosphates.. Functionally, bidirectionally degrades single-stranded DNA into large acid-insoluble oligonucleotides, which are then degraded further into small acid-soluble oligonucleotides. This is Exodeoxyribonuclease 7 large subunit from Brucella ovis (strain ATCC 25840 / 63/290 / NCTC 10512).